The following is a 463-amino-acid chain: MHLHFTPRQIVEKLDQYIIGQKDAKKAVAVALRNRYRRSKLAENLRDEIAPKNILMIGPTGVGKTEVARRMAKLVGAPFIKVEATKFTEVGYVGRDVESMVRDLVETSVRIVKEEMVVKVQDKAEEQANQRLVEILVPSPEKQSGFKNPLEMLFGGAQNSNQTSDTQEDVEIEKKRQDVERKLAAGLLEEEIVSIEVTEQQSSMFDMLQGTGMEQMGMNFQDALGSFMPKKTKKRKLSVKEARKLLTNEEAQRLIDMDEVTQEAVYRAEQLGIIFIDEIDKIAGKQSNSVDVSREGVQRDILPIVEGSNVATKYGSVKTDYILFVAAGAFHMSKPSDLIPELQGRFPIRVELTKLSTDDFVKILIEPDNALIKQYMALLATEGIEIEFSDEAIRKIAEIAYQVNQDTDNIGARRLHTIMEKLLEDLSFEASEITLEKITITPQYVEEKLATIAKNKDVSQFIL.

ATP-binding positions include I19, 61-66 (GVGKTE), D277, E341, and R413.

Belongs to the ClpX chaperone family. HslU subfamily. A double ring-shaped homohexamer of HslV is capped on each side by a ring-shaped HslU homohexamer. The assembly of the HslU/HslV complex is dependent on binding of ATP.

It localises to the cytoplasm. Functionally, ATPase subunit of a proteasome-like degradation complex; this subunit has chaperone activity. The binding of ATP and its subsequent hydrolysis by HslU are essential for unfolding of protein substrates subsequently hydrolyzed by HslV. HslU recognizes the N-terminal part of its protein substrates and unfolds these before they are guided to HslV for hydrolysis. The chain is ATP-dependent protease ATPase subunit HslU from Bacillus cereus (strain B4264).